Reading from the N-terminus, the 184-residue chain is NADH-quinone oxidoreductase subunit B (184 aa).

Residues cysteine 63, cysteine 64, cysteine 128, and cysteine 158 each coordinate [4Fe-4S] cluster.

This sequence belongs to the complex I 20 kDa subunit family. As to quaternary structure, NDH-1 is composed of 14 different subunits. Subunits NuoB, C, D, E, F, and G constitute the peripheral sector of the complex. [4Fe-4S] cluster is required as a cofactor.

The protein resides in the cell inner membrane. It carries out the reaction a quinone + NADH + 5 H(+)(in) = a quinol + NAD(+) + 4 H(+)(out). Its function is as follows. NDH-1 shuttles electrons from NADH, via FMN and iron-sulfur (Fe-S) centers, to quinones in the respiratory chain. Couples the redox reaction to proton translocation (for every two electrons transferred, four hydrogen ions are translocated across the cytoplasmic membrane), and thus conserves the redox energy in a proton gradient. This chain is NADH-quinone oxidoreductase subunit B, found in Xanthomonas campestris pv. campestris (strain 8004).